Here is a 282-residue protein sequence, read N- to C-terminus: U1 small nuclear ribonucleoprotein A (282 aa).

Residue alanine 2 is modified to N-acetylalanine. The 80-residue stretch at 10 to 89 (HTIYINNLNE…KPMRIQYAKT (80 aa)) folds into the RRM 1 domain. At lysine 60 the chain carries N6-acetyllysine. Residues 101–141 (FVERDRKREKRKPKSQETPAAKKAVQGGAAAPVVGTVQGPV) are disordered. The segment covering 119-141 (PAAKKAVQGGAAAPVVGTVQGPV) has biased composition (low complexity). Arginine 152 is subject to Omega-N-methylarginine. Positions 208–282 (HILFLTNLPE…NAMKISFAKK (75 aa)) constitute an RRM 2 domain.

This sequence belongs to the RRM U1 A/B'' family. U1 snRNP is composed of the 7 core Sm proteins SNRPB, SNRPD1, SNRPD2, SNRPD3, SNRPE, SNRPF and SNRPG that assemble in a heptameric protein ring on the Sm site of the small nuclear RNA to form the core snRNP, and at least three U1 snRNP-specific proteins SNRNP70/U1-70K, SNRPA/U1-A and SNRPC/U1-C. Interacts with SFPQ; component of a snRNP-free complex with SFPQ.

The protein resides in the nucleus. Its function is as follows. Component of the spliceosomal U1 snRNP, which is essential for recognition of the pre-mRNA 5' splice-site and the subsequent assembly of the spliceosome. U1 snRNP is the first snRNP to interact with pre-mRNA. This interaction is required for the subsequent binding of U2 snRNP and the U4/U6/U5 tri-snRNP. SNRPA binds stem loop II of U1 snRNA. In a snRNP-free form (SF-A) may be involved in coupled pre-mRNA splicing and polyadenylation process. May bind preferentially to the 5'-UGCAC-3' motif on RNAs. The protein is U1 small nuclear ribonucleoprotein A (SNRPA) of Bos taurus (Bovine).